The sequence spans 391 residues: GTPase Obg (391 aa).

The 159-residue stretch at 1-159 (MKFLDQAKIF…IWVWLRLKLI (159 aa)) folds into the Obg domain. An OBG-type G domain is found at 160–327 (ADAGLIGLPN…VLRVMATHVD (168 aa)). GTP-binding positions include 166 to 173 (GLPNAGKS), 191 to 195 (FTTLH), 212 to 215 (DIPG), 279 to 282 (SKID), and 308 to 310 (SAI). Mg(2+) is bound by residues Ser-173 and Thr-193. The interval 352–391 (TGIDHGYNRPSAVVDWEDAPFDDDDDDDGDESGDKGQWTR) is disordered. Over residues 366–382 (DWEDAPFDDDDDDDGDE) the composition is skewed to acidic residues.

It belongs to the TRAFAC class OBG-HflX-like GTPase superfamily. OBG GTPase family. Monomer. The cofactor is Mg(2+).

The protein localises to the cytoplasm. Functionally, an essential GTPase which binds GTP, GDP and possibly (p)ppGpp with moderate affinity, with high nucleotide exchange rates and a fairly low GTP hydrolysis rate. Plays a role in control of the cell cycle, stress response, ribosome biogenesis and in those bacteria that undergo differentiation, in morphogenesis control. This Rhodospirillum rubrum (strain ATCC 11170 / ATH 1.1.1 / DSM 467 / LMG 4362 / NCIMB 8255 / S1) protein is GTPase Obg.